A 334-amino-acid polypeptide reads, in one-letter code: MNEDPKVNLSGLPRDCIEAGTPENISAAVPSQGSVVESEPELVVNPWDIVLCSSGTLICCENAVVVLIIFHSPSLRAPMFLLIGSLALADLLAGLGLIINFVFAYLLQSEATKLVTIGLIVASFSASVCSLLAITVDRYLSLYYALTYHSERTVTFTYVMLVMLWGTSTCLGLLPVMGWNCLRDESTCSVVRPLTKNNAAILSISFLFMFALMLQLYIQICKIVMRHAHQIALQHHFLATSHYVTTRKGISTLALILGTFAACWMPFTLYSLIADYTYPSIYTYATLLPATYNSIINPVIYAFRNQEIQKALCLICCGCIPNTLSQRARSPSDV.

Over 1–48 the chain is Extracellular; sequence MNEDPKVNLSGLPRDCIEAGTPENISAAVPSQGSVVESEPELVVNPWD. Asparagine 8 and asparagine 24 each carry an N-linked (GlcNAc...) asparagine glycan. A helical transmembrane segment spans residues 49 to 69; the sequence is IVLCSSGTLICCENAVVVLII. Residues 70–78 lie on the Cytoplasmic side of the membrane; that stretch reads FHSPSLRAP. The helical transmembrane segment at 79–99 threads the bilayer; it reads MFLLIGSLALADLLAGLGLII. The Extracellular portion of the chain corresponds to 100-113; the sequence is NFVFAYLLQSEATK. The chain crosses the membrane as a helical span at residues 114–134; sequence LVTIGLIVASFSASVCSLLAI. At 135 to 158 the chain is on the cytoplasmic side; the sequence is TVDRYLSLYYALTYHSERTVTFTY. The helical transmembrane segment at 159–179 threads the bilayer; that stretch reads VMLVMLWGTSTCLGLLPVMGW. Residues 180–199 lie on the Extracellular side of the membrane; that stretch reads NCLRDESTCSVVRPLTKNNA. A helical transmembrane segment spans residues 200–220; the sequence is AILSISFLFMFALMLQLYIQI. Residues 221–252 are Cytoplasmic-facing; that stretch reads CKIVMRHAHQIALQHHFLATSHYVTTRKGIST. The helical transmembrane segment at 253–273 threads the bilayer; sequence LALILGTFAACWMPFTLYSLI. The Extracellular segment spans residues 274-282; the sequence is ADYTYPSIY. The helical transmembrane segment at 283–303 threads the bilayer; sequence TYATLLPATYNSIINPVIYAF. At 304–334 the chain is on the cytoplasmic side; that stretch reads RNQEIQKALCLICCGCIPNTLSQRARSPSDV. Residue cysteine 317 is the site of S-palmitoyl cysteine attachment. Residues serine 330 and serine 332 each carry the phosphoserine modification.

This sequence belongs to the G-protein coupled receptor 1 family. In terms of tissue distribution, expressed in the brain, pituitary gland and testis.

The protein localises to the cell membrane. Receptor with constitutive G(s) signaling activity that activates cyclic AMP. Promotes neurite outgrowth and blocks myelin inhibition in neurons. The polypeptide is G-protein coupled receptor 12 (Gpr12) (Rattus norvegicus (Rat)).